The primary structure comprises 227 residues: MSKLLLVDDDIELTELLSTLLELEGFDVETANNGLEALQKLNESYKLVLLDVMMPKLNGIETLKEIRKVSNVPVMMLTARGEDIDRVLGLELGADDCLPKPFNDRELIARIKAILRRSASPSNNISNVEILSFDGITLHFSHGIATYNEENLNLTDYEFKILCLLLKSKGNVVSREELSLEVMEKPLTPFDRSLDMHISNLRRKLPKRKNKPSWFKTLRGKGYALVT.

Positions lysine 3–leucine 115 constitute a Response regulatory domain. The residue at position 51 (aspartate 51) is a 4-aspartylphosphate. Positions valine 128–threonine 227 form a DNA-binding region, ompR/PhoB-type.

Post-translationally, phosphorylated.

Its subcellular location is the cytoplasm. Its function is as follows. Member of a two-component regulatory system. This chain is Transcriptional regulatory protein CpxR homolog (cpxR), found in Haemophilus influenzae (strain ATCC 51907 / DSM 11121 / KW20 / Rd).